The sequence spans 1048 residues: MTISGGNQHNNNANRKYEKLIKQPQMQFGSSVTGTQTDVDSCRDADADANAVRQDFSNFNKHFGNGHAITDRTMLLRLEDDVTTAAGIVTYKGKSNGNGNGNGNGSIGSISLDFNGSPTSSTSIGIASGSSSNTHLASGGGVGGIGGSEPAGWMCHCCNLIARRCFGINVRRCVLALLAITMVSIFYYTHYVDTGVFNGLIQRDTHPAPIINCRMINSGGKHIRNASPAPDHRSEARLRIDPKVLVFVETTYSGLGRDIAELLVYNRIKYKIEVAGKSLPVLTNLDKGRYGVIVFENLDKYLNMDKWNRELLDKYCREYSVGIVGFVSPSEETLVGAQLRDFPLFVNTNLRLRDASLNPLSSVLRLTRAGETAWGALPGDDWAVFQHNHSTYEPVEWAQRNTQEYPADSVGQVQLPLTTVLQDRGQLDGIQRVLFGSSLRFWLHRLVFLDALSYLSHGQLSLNLERMILVDIDDIFVGEKGTRLRPDDVRALIATQKNIAAMVPGFRFNLGFSGKYYHHGTREENLGDDFLLQNVQEFNWFSHMWKHQQPHLYDNLTLLMAEMHLNYAFAVDHNIPTDSGYSISPHHSGVYPAHELLYMAWKKVWNVKVTSTEEYPHLRPARLRRGFIHRNIMVLPRQTCGLFTHTMYIDRYPGGRDKLDESIQGGELFQTIVYNPINIFMTHMSNYGSDRLALYTFQSVIKFLQCWTNLKLASAPPVQLAEMYFRLHPEEVDPVWGNPCDDVRHKKIWSKTKNCDSLPKFLVIGPQKTGTTALYTFLSMHGSIASNIASPETFEEVQFFNGNNYYRGLDWYMDFFPSESLPNTSSPMPTQLGSPRFMFEKSATYFDGEAVPKRSHALLPHAKIVTILISPAKRAYSWYQHQRSHGDVIANNYSFYQVITASDSAPRALKDLRNRCLNPGKYAQHLEHWLAYYPAQQLHIIDGEQLRLNPIDVMNELQRFLKIQPLLDYSNHLRYDVKKGFYCQAVSEKRNKCLGKSKGRQYPAMDERSAKLLQRYYLNHNTALVKLLKKLGSRPIPQWLKDDLSTGT.

Residues 1–172 (MTISGGNQHN…RRCFGINVRR (172 aa)) lie on the Cytoplasmic side of the membrane. A helical; Signal-anchor for type II membrane protein membrane pass occupies residues 173–192 (CVLALLAITMVSIFYYTHYV). Residues 192 to 752 (VDTGVFNGLI…VRHKKIWSKT (561 aa)) form a heparan sulfate N-deacetylase region. The Lumenal segment spans residues 193 to 1048 (DTGVFNGLIQ…WLKDDLSTGT (856 aa)). Asn388 and Asn555 each carry an N-linked (GlcNAc...) asparagine glycan. Positions 753-1048 (KNCDSLPKFL…WLKDDLSTGT (296 aa)) are heparan sulfate N-sulfotransferase. The active-site For sulfotransferase activity is Lys768. 3'-phosphoadenylyl sulfate is bound at residue 768–772 (KTGTT). A glycan (N-linked (GlcNAc...) asparagine) is linked at Asn823. Ser877 is a binding site for 3'-phosphoadenylyl sulfate. A glycan (N-linked (GlcNAc...) asparagine) is linked at Asn892. Cys983 and Cys993 are disulfide-bonded. Residue 998-1002 (KGRQY) coordinates 3'-phosphoadenylyl sulfate.

It belongs to the sulfotransferase 1 family. NDST subfamily. Monomer.

The protein localises to the golgi apparatus membrane. The catalysed reaction is alpha-D-glucosaminyl-[heparan sulfate](n) + 3'-phosphoadenylyl sulfate = N-sulfo-alpha-D-glucosaminyl-[heparan sulfate](n) + adenosine 3',5'-bisphosphate + 2 H(+). It participates in glycan metabolism; heparan sulfate biosynthesis. Its pathway is glycan metabolism; heparin biosynthesis. In terms of biological role, essential bifunctional enzyme that catalyzes both the N-deacetylation and the N-sulfation of glucosamine (GlcNAc) of the glycosaminoglycan in heparan sulfate. Modifies the GlcNAc-GlcA disaccharide repeating sugar backbone to make N-sulfated heparosan, a prerequisite substrate for later modifications in heparin biosynthesis. Plays a role in diffusion of morphogen wingless (wg) via its role in heparan sulfate proteoglycans (HSPGs) biosynthesis, HSPGs being required for movement of wg morphogens. Required for wg signaling during both embryonic and imaginal disk development. Also required for FGF receptor signaling. In Drosophila melanogaster (Fruit fly), this protein is Bifunctional heparan sulfate N-deacetylase/N-sulfotransferase (sfl).